Here is an 859-residue protein sequence, read N- to C-terminus: DNA mismatch repair protein MutS (859 aa).

Residue 614–621 (GPNMGGKS) coordinates ATP.

This sequence belongs to the DNA mismatch repair MutS family.

Its function is as follows. This protein is involved in the repair of mismatches in DNA. It is possible that it carries out the mismatch recognition step. This protein has a weak ATPase activity. This is DNA mismatch repair protein MutS from Histophilus somni (strain 2336) (Haemophilus somnus).